A 39-amino-acid chain; its full sequence is Large ribosomal subunit protein bL36 (39 aa).

It belongs to the bacterial ribosomal protein bL36 family.

The chain is Large ribosomal subunit protein bL36 from Lactiplantibacillus plantarum (strain ATCC BAA-793 / NCIMB 8826 / WCFS1) (Lactobacillus plantarum).